The primary structure comprises 546 residues: Interleukin-20 receptor subunit alpha (546 aa).

Residues 1 to 32 (MHTPGTPAPGHPDPPPLLLLTLLLLLAASGRA) form the signal peptide. Residues 33-253 (VPCVFCGLPK…EVQTSAWKAK (221 aa)) lie on the Extracellular side of the membrane. Fibronectin type-III domains follow at residues 42–138 (KPTN…FLET) and 139–245 (QVSP…TLEV). Residues N45, N86, N94, N185, and N203 are each glycosylated (N-linked (GlcNAc...) asparagine). Residues C90 and C98 are joined by a disulfide bond. C218 and C239 are joined by a disulfide. Residues 254 to 274 (VIFWYVFLTSVIVFLFSAIGY) traverse the membrane as a helical segment. Topologically, residues 275–546 (LVYRYIHVGK…EWGLHVQMES (272 aa)) are cytoplasmic.

Belongs to the type II cytokine receptor family. Heterodimer with IL20RB and heterodimer with IL10RB.

The protein localises to the membrane. Functionally, the IL20RA/IL20RB dimer is a receptor for IL19, IL20 and IL24. The IL20RA/IL10RB dimer is a receptor for IL26. This Mus musculus (Mouse) protein is Interleukin-20 receptor subunit alpha (Il20ra).